Consider the following 335-residue polypeptide: MLP-like protein 28 (335 aa).

This sequence belongs to the MLP family.

Functionally, can bind steroids (in vitro), and may also bind other types of hydrophobic ligands. The sequence is that of MLP-like protein 28 (MLP28) from Arabidopsis thaliana (Mouse-ear cress).